Here is a 98-residue protein sequence, read N- to C-terminus: NADH-ubiquinone oxidoreductase chain 4L (98 aa).

3 helical membrane passes run 1 to 21 (MMSI…GVLI), 28 to 48 (STLL…ALII), and 59 to 79 (APLI…ALLV).

It belongs to the complex I subunit 4L family. Core subunit of respiratory chain NADH dehydrogenase (Complex I) which is composed of 45 different subunits.

It localises to the mitochondrion inner membrane. The enzyme catalyses a ubiquinone + NADH + 5 H(+)(in) = a ubiquinol + NAD(+) + 4 H(+)(out). Core subunit of the mitochondrial membrane respiratory chain NADH dehydrogenase (Complex I) which catalyzes electron transfer from NADH through the respiratory chain, using ubiquinone as an electron acceptor. Part of the enzyme membrane arm which is embedded in the lipid bilayer and involved in proton translocation. The chain is NADH-ubiquinone oxidoreductase chain 4L (MT-ND4L) from Lagostrophus fasciatus (Banded hare-wallaby).